The following is an 870-amino-acid chain: Leucine--tRNA ligase (870 aa).

A 'HIGH' region motif is present at residues 36–46 (PYPSGKIHLGH). The 'KMSKS' region motif lies at 602–606 (KMSKS). Lysine 605 is a binding site for ATP.

Belongs to the class-I aminoacyl-tRNA synthetase family.

Its subcellular location is the cytoplasm. The catalysed reaction is tRNA(Leu) + L-leucine + ATP = L-leucyl-tRNA(Leu) + AMP + diphosphate. In Rickettsia akari (strain Hartford), this protein is Leucine--tRNA ligase.